A 624-amino-acid chain; its full sequence is Ubiquitin carboxyl-terminal hydrolase 16 (624 aa).

Residues 46 to 620 (VGLSNPANDC…EVYLLFYEIE (575 aa)) form the USP domain. The active-site Nucleophile is the C55. H424 serves as the catalytic Proton acceptor. The tract at residues 453-573 (SENPSRVASP…ATDTEASASA (121 aa)) is disordered. Positions 479–496 (SPPASTSTNSPLSLTPDS) are enriched in low complexity. Residues 518-544 (VSFQSTHSSSKQTISPTSAARNSSSLD) are compositionally biased toward polar residues. A compositionally biased stretch (low complexity) spans 546–573 (ARLSSPASRSSLAERNASATDTEASASA).

The protein belongs to the peptidase C19 family.

The enzyme catalyses Thiol-dependent hydrolysis of ester, thioester, amide, peptide and isopeptide bonds formed by the C-terminal Gly of ubiquitin (a 76-residue protein attached to proteins as an intracellular targeting signal).. The chain is Ubiquitin carboxyl-terminal hydrolase 16 (ubp16) from Emericella nidulans (strain FGSC A4 / ATCC 38163 / CBS 112.46 / NRRL 194 / M139) (Aspergillus nidulans).